We begin with the raw amino-acid sequence, 317 residues long: Cold tolerance protein 1 (317 aa).

Belongs to the CTO1 family.

Functionally, protein required for cold tolerance. Plays a role in the regulation of phosphate uptake. The polypeptide is Cold tolerance protein 1 (Saccharomyces cerevisiae (strain ATCC 204508 / S288c) (Baker's yeast)).